The sequence spans 133 residues: ATP synthase epsilon chain, chloroplastic (133 aa).

It belongs to the ATPase epsilon chain family. In terms of assembly, F-type ATPases have 2 components, CF(1) - the catalytic core - and CF(0) - the membrane proton channel. CF(1) has five subunits: alpha(3), beta(3), gamma(1), delta(1), epsilon(1). CF(0) has three main subunits: a, b and c.

Its subcellular location is the plastid. The protein localises to the chloroplast thylakoid membrane. In terms of biological role, produces ATP from ADP in the presence of a proton gradient across the membrane. This chain is ATP synthase epsilon chain, chloroplastic, found in Citrus sinensis (Sweet orange).